The following is a 132-amino-acid chain: Hemoglobin heart muscle subunit alpha-type (132 aa).

The region spanning 1–132 is the Globin domain; it reads GLSDSEKSAV…GEVGAILTSS (132 aa). Residues His58 and His83 each coordinate heme b.

It belongs to the globin family. Monomer.

In terms of biological role, this hemoglobin may replace myocardial myoglobin in this amphibian species. The polypeptide is Hemoglobin heart muscle subunit alpha-type (Aquarana catesbeiana (American bullfrog)).